Consider the following 507-residue polypeptide: Chromosomal replication initiator protein DnaA (507 aa).

Residues 1-112 are domain I, interacts with DnaA modulators; it reads MTDDPGSGFT…PATDEADDTT (112 aa). A disordered region spans residues 99-155; the sequence is RIAPPATDEADDTTVPPSENPATTSPDTTTDNDEIDDSAAARGDNQHSWPSYFTERP. Residues 113-127 are compositionally biased toward polar residues; that stretch reads VPPSENPATTSPDTT. The interval 113–166 is domain II; the sequence is VPPSENPATTSPDTTTDNDEIDDSAAARGDNQHSWPSYFTERPHNTDSATAGVT. The tract at residues 167 to 383 is domain III, AAA+ region; the sequence is SLNRRYTFDT…GALIRVTAFA (217 aa). ATP is bound by residues glycine 211, glycine 213, lysine 214, and threonine 215. The domain IV, binds dsDNA stretch occupies residues 384 to 507; the sequence is SLNKTPIDKA…TTRIRQRSKR (124 aa).

The protein belongs to the DnaA family. In terms of assembly, oligomerizes as a right-handed, spiral filament on DNA at oriC.

The protein resides in the cytoplasm. In terms of biological role, plays an essential role in the initiation and regulation of chromosomal replication. ATP-DnaA binds to the origin of replication (oriC) to initiate formation of the DNA replication initiation complex once per cell cycle. Binds the DnaA box (a 9 base pair repeat at the origin) and separates the double-stranded (ds)DNA. Forms a right-handed helical filament on oriC DNA; dsDNA binds to the exterior of the filament while single-stranded (ss)DNA is stabiized in the filament's interior. The ATP-DnaA-oriC complex binds and stabilizes one strand of the AT-rich DNA unwinding element (DUE), permitting loading of DNA polymerase. After initiation quickly degrades to an ADP-DnaA complex that is not apt for DNA replication. Binds acidic phospholipids. In Mycobacterium tuberculosis (strain ATCC 25177 / H37Ra), this protein is Chromosomal replication initiator protein DnaA.